Reading from the N-terminus, the 227-residue chain is Octanoyltransferase (227 aa).

The BPL/LPL catalytic domain occupies Arg-34–Trp-212. Substrate-binding positions include Arg-76 to His-83, Ala-143 to Ala-145, and Gly-156 to Ala-158. Cys-174 (acyl-thioester intermediate) is an active-site residue.

This sequence belongs to the LipB family.

The protein resides in the cytoplasm. The catalysed reaction is octanoyl-[ACP] + L-lysyl-[protein] = N(6)-octanoyl-L-lysyl-[protein] + holo-[ACP] + H(+). It functions in the pathway protein modification; protein lipoylation via endogenous pathway; protein N(6)-(lipoyl)lysine from octanoyl-[acyl-carrier-protein]: step 1/2. Its function is as follows. Catalyzes the transfer of endogenously produced octanoic acid from octanoyl-acyl-carrier-protein onto the lipoyl domains of lipoate-dependent enzymes. Lipoyl-ACP can also act as a substrate although octanoyl-ACP is likely to be the physiological substrate. The protein is Octanoyltransferase of Synechocystis sp. (strain ATCC 27184 / PCC 6803 / Kazusa).